The sequence spans 376 residues: Alanine racemase (376 aa).

Lysine 36 acts as the Proton acceptor; specific for D-alanine in catalysis. Lysine 36 carries the N6-(pyridoxal phosphate)lysine modification. Arginine 134 is a binding site for substrate. Catalysis depends on tyrosine 266, which acts as the Proton acceptor; specific for L-alanine. Substrate is bound at residue methionine 314.

It belongs to the alanine racemase family. It depends on pyridoxal 5'-phosphate as a cofactor.

The enzyme catalyses L-alanine = D-alanine. The protein operates within amino-acid biosynthesis; D-alanine biosynthesis; D-alanine from L-alanine: step 1/1. Its function is as follows. Catalyzes the interconversion of L-alanine and D-alanine. May also act on other amino acids. This Nitratidesulfovibrio vulgaris (strain DP4) (Desulfovibrio vulgaris) protein is Alanine racemase (alr).